Here is a 20-residue protein sequence, read N- to C-terminus: U1-poneritoxin-Ni1a (20 aa).

Lysine amide is present on K20.

The protein belongs to the non-disulfide-bridged peptide (NDBP) superfamily. Medium-length antimicrobial peptide (group 3) family. Ponericin-W subfamily. As to expression, expressed by the venom gland.

Its subcellular location is the secreted. It localises to the target cell membrane. In terms of biological role, has activity against Gram-positive bacteria. Has insecticidal and hemolytic activities. May act by disrupting the integrity of the bacterial cell membrane. This is U1-poneritoxin-Ni1a from Neoponera inversa (Ant).